Here is a 290-residue protein sequence, read N- to C-terminus: Nucleotide-binding protein Xfasm12_0753 (290 aa).

13–20 (GLSGSGKS) lines the ATP pocket. 65–68 (DIRS) provides a ligand contact to GTP.

The protein belongs to the RapZ-like family.

Its function is as follows. Displays ATPase and GTPase activities. This chain is Nucleotide-binding protein Xfasm12_0753, found in Xylella fastidiosa (strain M12).